The chain runs to 331 residues: Heme A synthase (331 aa).

Helical transmembrane passes span 6 to 26, 87 to 107, 124 to 144, 154 to 174, 193 to 213, 251 to 271, 279 to 299, and 301 to 321; these read VAIW…IGGF, YVHR…FIYF, ALLF…SGLV, LALH…QFFD, IWII…VAGL, VQFI…ILTI, LYVM…TLLL, and IPMA…GSGL. Position 255 (His255) interacts with heme. His309 serves as a coordination point for heme.

It belongs to the COX15/CtaA family. Type 2 subfamily. As to quaternary structure, interacts with CtaB. The cofactor is heme b.

It is found in the cell membrane. It carries out the reaction Fe(II)-heme o + 2 A + H2O = Fe(II)-heme a + 2 AH2. The protein operates within porphyrin-containing compound metabolism; heme A biosynthesis; heme A from heme O: step 1/1. In terms of biological role, catalyzes the conversion of heme O to heme A by two successive hydroxylations of the methyl group at C8. The first hydroxylation forms heme I, the second hydroxylation results in an unstable dihydroxymethyl group, which spontaneously dehydrates, resulting in the formyl group of heme A. The chain is Heme A synthase from Wolbachia pipientis subsp. Culex pipiens (strain wPip).